A 307-amino-acid chain; its full sequence is MSMADRDGVIWYDGELVQWRDATTHVLTHTLHYGMGVFEGVRAYDTPQGTAIFRLQAHTDRLFDSAHIMNMQIPYSRDEINEATRAAVRENNLESAYIRPMVFYGSEGMGLRASGLKVHVIIAAWSWGAYMGEEALQQGIKVRTSSFTRHHVNISMTRAKSNGAYINSMLALQEAISGGADEAMMLDPEGYVAEGSGENIFIIKDGVIYTPEVTACLNGITRNTILTLAAEHGFKLVEKRITRDEVYIADEAFFTGTAAEVTPIREVDGRKIGAGRRGPVTEKLQKAYFDLVSGKTEAHAEWRTLVK.

At K160 the chain carries N6-(pyridoxal phosphate)lysine.

Belongs to the class-IV pyridoxal-phosphate-dependent aminotransferase family. Requires pyridoxal 5'-phosphate as cofactor.

It carries out the reaction L-leucine + 2-oxoglutarate = 4-methyl-2-oxopentanoate + L-glutamate. The catalysed reaction is L-isoleucine + 2-oxoglutarate = (S)-3-methyl-2-oxopentanoate + L-glutamate. The enzyme catalyses L-valine + 2-oxoglutarate = 3-methyl-2-oxobutanoate + L-glutamate. It functions in the pathway amino-acid biosynthesis; L-isoleucine biosynthesis; L-isoleucine from 2-oxobutanoate: step 4/4. Its pathway is amino-acid biosynthesis; L-leucine biosynthesis; L-leucine from 3-methyl-2-oxobutanoate: step 4/4. It participates in amino-acid biosynthesis; L-valine biosynthesis; L-valine from pyruvate: step 4/4. Functionally, acts on leucine, isoleucine and valine. This Pseudomonas aeruginosa (strain ATCC 15692 / DSM 22644 / CIP 104116 / JCM 14847 / LMG 12228 / 1C / PRS 101 / PAO1) protein is Branched-chain-amino-acid aminotransferase (ilvE).